The sequence spans 688 residues: Probable glucan endo-1,3-beta-glucosidase btgC (688 aa).

3 disordered regions span residues 1–49 (MSGP…MNGQ), 61–91 (DGRQGWGRSPEPSPSLLTGSSATPGMDNLGP), and 169–194 (QLTPGQSVSHLSSTNPSQRNLYDIPY). Residues 1-307 (MSGPNRTYSF…PKPGGGNKKR (307 aa)) are Cytoplasmic-facing. Positions 175–188 (SVSHLSSTNPSQRN) are enriched in polar residues. The helical; Signal-anchor for type II membrane protein transmembrane segment at 308-328 (GWIVGAILAFIIIGAIVGGAV) threads the bilayer. At 329–688 (GGTIGHRGNE…IPDCGGKTAT (360 aa)) the chain is on the extracellular side. A disordered region spans residues 334 to 363 (HRGNEEPSSASSASSSSTQTATEDTSVNGD). Low complexity predominate over residues 341–355 (SSASSASSSSTQTAT). N-linked (GlcNAc...) asparagine glycosylation is found at asparagine 408, asparagine 431, and asparagine 459. Residue glutamate 491 is the Proton donor of the active site. The Nucleophile role is filled by glutamate 590. N-linked (GlcNAc...) asparagine glycosylation is found at asparagine 609 and asparagine 635.

The protein belongs to the glycosyl hydrolase 17 family.

It localises to the cell membrane. It carries out the reaction Hydrolysis of (1-&gt;3)-beta-D-glucosidic linkages in (1-&gt;3)-beta-D-glucans.. In terms of biological role, glucanases play a role in cell expansion during growth, in cell-cell fusion during mating, and in spore release during sporulation. This enzyme may be involved in beta-glucan degradation. Active on laminarin and lichenan. The protein is Probable glucan endo-1,3-beta-glucosidase btgC (btgC) of Aspergillus fumigatus (strain CBS 144.89 / FGSC A1163 / CEA10) (Neosartorya fumigata).